Here is a 498-residue protein sequence, read N- to C-terminus: MRNGTIRYPGSDAAPGPDEMSAILRRCGIRLAPARIGQLWTYHQLLREFNPELNLTRIHNFANMVLKLYVDSLLPMNLVELPSPLMDLGTGPGMPGIPIKIAMPELEIVLAESRQKRAAFLKMAVERLKLEKVEVVGKSVGSSFEVPVKGVITRAVESVGATLERIAGCLDRDGLAIFMKGPQCDAEIGEALKRFRGEYRLWRDIHYTIPHTRNERRLVVFQRLGPPTRIRKETAMKRHGFRKIESENNDLYRDIRKLLTSRGIRKQQRALVSGSKQVHETLRDFPDDCLAWIAPGQEMPPPEGAPGHMSWYQMAPALFETLDVFGTRTPLLLIKVGEIETWDPVEGFPAGCSVLVPFQDPENVGAVIRSAAAFGAVQVILLRESAHPFHPKALRASGGAVLRMKLRNGPPLENLPENLPILPLSAEGRDITRHVFPAAFGLLPGLEGPGLPDNWRRKSFAIPICKDVESLNAATAAAIALYAWSRSGSQTKHSPAPA.

A methyltransferase G region spans residues 1–230 (MRNGTIRYPG…FQRLGPPTRI (230 aa)). S-adenosyl-L-methionine-binding residues include G89, M94, and R154. The interval 231–498 (RKETAMKRHG…SQTKHSPAPA (268 aa)) is methyltransferase TrmH family.

This sequence in the N-terminal section; belongs to the methyltransferase superfamily. RNA methyltransferase RsmG family. It in the C-terminal section; belongs to the class IV-like SAM-binding methyltransferase superfamily. RNA methyltransferase TrmH family.

It localises to the cytoplasm. It carries out the reaction guanosine(527) in 16S rRNA + S-adenosyl-L-methionine = N(7)-methylguanosine(527) in 16S rRNA + S-adenosyl-L-homocysteine. Specifically methylates the N7 position of guanine in position 527 of 16S rRNA. The protein is Ribosomal RNA small subunit methyltransferase G 2 (rsmG2) of Syntrophobacter fumaroxidans (strain DSM 10017 / MPOB).